We begin with the raw amino-acid sequence, 120 residues long: Large ribosomal subunit protein uL18 (120 aa).

Basic residues predominate over residues 1-20 (MKSTRKSATQRRHRRLRRHL). The disordered stretch occupies residues 1–26 (MKSTRKSATQRRHRRLRRHLSGTSER).

Belongs to the universal ribosomal protein uL18 family. In terms of assembly, part of the 50S ribosomal subunit; part of the 5S rRNA/L5/L18/L25 subcomplex. Contacts the 5S and 23S rRNAs.

In terms of biological role, this is one of the proteins that bind and probably mediate the attachment of the 5S RNA into the large ribosomal subunit, where it forms part of the central protuberance. This chain is Large ribosomal subunit protein uL18, found in Synechocystis sp. (strain ATCC 27184 / PCC 6803 / Kazusa).